Reading from the N-terminus, the 113-residue chain is Nucleoid-associated protein FMG_0513 (113 aa).

The segment at 1 to 44 (MGNKFRGGMPGMGNMGNMMKQMQKMQRQMEETQKRLEETEVTAT) is disordered. Residues 15–26 (MGNMMKQMQKMQ) show a composition bias toward low complexity. The segment covering 27-38 (RQMEETQKRLEE) has biased composition (basic and acidic residues).

Belongs to the YbaB/EbfC family. In terms of assembly, homodimer.

The protein resides in the cytoplasm. It is found in the nucleoid. In terms of biological role, binds to DNA and alters its conformation. May be involved in regulation of gene expression, nucleoid organization and DNA protection. The protein is Nucleoid-associated protein FMG_0513 of Finegoldia magna (strain ATCC 29328 / DSM 20472 / WAL 2508) (Peptostreptococcus magnus).